Here is a 152-residue protein sequence, read N- to C-terminus: Neuropeptide W (152 aa).

The first 32 residues, Met-1–Ala-32, serve as a signal peptide directing secretion. The propeptide occupies Ala-65–Glu-152. 2 disordered regions span residues Gly-79–Gly-108 and Ser-122–Glu-152. The span at Gly-96–Pro-106 shows a compositional bias: pro residues.

The protein belongs to the neuropeptide B/W family.

The protein localises to the secreted. Functionally, plays a regulatory role in the organization of neuroendocrine signals accessing the anterior pituitary gland. Stimulates water drinking and food intake. May play a role in the hypothalamic response to stress. This chain is Neuropeptide W (NPW), found in Sus scrofa (Pig).